The sequence spans 1202 residues: Calmodulin-binding transcription activator 2 (1202 aa).

The segment at residues 30–155 (RCPLLPPERL…YLNVPALEDC (126 aa)) is a DNA-binding region (CG-1). The short motif at 79 to 86 (RKKVKYRK) is the Nuclear localization signal element. Disordered regions lie at residues 263 to 322 (SIPH…SRGG), 361 to 409 (GTEP…AHTP), and 421 to 491 (PQAA…LFGG). The segment covering 270–283 (PEPPPLIAPLPPEL) has biased composition (pro residues). Composition is skewed to low complexity over residues 289–299 (SPSSSSSSSSS) and 313–322 (TSRGGSSRGG). Composition is skewed to pro residues over residues 365–374 (SAPPAPPSPA) and 460–476 (PPIP…PAPL). One can recognise an IPT/TIG domain in the interval 537–615 (DFSPEWSYPE…LSASVLFEYR (79 aa)). ANK repeat units follow at residues 712-745 (MSLL…DLEQ), 757-787 (CTPL…SIPD), and 791-821 (RLPL…SVEP). Disordered stretches follow at residues 817 to 874 (PSVE…ASEM) and 906 to 929 (PLSS…ADSP). 2 stretches are compositionally biased toward low complexity: residues 826-846 (SPPS…SELS) and 906-917 (PLSSLPALPPAS). IQ domains are found at residues 1049–1078 (YEAA…AAVI) and 1102–1131 (TQAA…AVLI).

Belongs to the CAMTA family. As to quaternary structure, may interact with calmodulin. In terms of tissue distribution, detected in brain. Expressed at constant levels throughout the cell cycle in neuroblastoma cell lines.

The protein localises to the nucleus. Transcription activator. May act as tumor suppressor. In Homo sapiens (Human), this protein is Calmodulin-binding transcription activator 2 (CAMTA2).